The sequence spans 898 residues: Phosphoenolpyruvate carboxylase (898 aa).

Catalysis depends on residues H134 and K564.

The protein belongs to the PEPCase type 1 family. Requires Mg(2+) as cofactor.

It carries out the reaction oxaloacetate + phosphate = phosphoenolpyruvate + hydrogencarbonate. In terms of biological role, forms oxaloacetate, a four-carbon dicarboxylic acid source for the tricarboxylic acid cycle. This is Phosphoenolpyruvate carboxylase from Chromobacterium violaceum (strain ATCC 12472 / DSM 30191 / JCM 1249 / CCUG 213 / NBRC 12614 / NCIMB 9131 / NCTC 9757 / MK).